Here is a 206-residue protein sequence, read N- to C-terminus: Probable nicotinate-nucleotide adenylyltransferase (206 aa).

Belongs to the NadD family.

The catalysed reaction is nicotinate beta-D-ribonucleotide + ATP + H(+) = deamido-NAD(+) + diphosphate. Its pathway is cofactor biosynthesis; NAD(+) biosynthesis; deamido-NAD(+) from nicotinate D-ribonucleotide: step 1/1. In terms of biological role, catalyzes the reversible adenylation of nicotinate mononucleotide (NaMN) to nicotinic acid adenine dinucleotide (NaAD). This chain is Probable nicotinate-nucleotide adenylyltransferase, found in Gloeobacter violaceus (strain ATCC 29082 / PCC 7421).